Reading from the N-terminus, the 307-residue chain is Methionyl-tRNA formyltransferase (307 aa).

108–111 (SLLP) is a (6S)-5,6,7,8-tetrahydrofolate binding site.

It belongs to the Fmt family.

It carries out the reaction L-methionyl-tRNA(fMet) + (6R)-10-formyltetrahydrofolate = N-formyl-L-methionyl-tRNA(fMet) + (6S)-5,6,7,8-tetrahydrofolate + H(+). Functionally, attaches a formyl group to the free amino group of methionyl-tRNA(fMet). The formyl group appears to play a dual role in the initiator identity of N-formylmethionyl-tRNA by promoting its recognition by IF2 and preventing the misappropriation of this tRNA by the elongation apparatus. This Renibacterium salmoninarum (strain ATCC 33209 / DSM 20767 / JCM 11484 / NBRC 15589 / NCIMB 2235) protein is Methionyl-tRNA formyltransferase.